Reading from the N-terminus, the 692-residue chain is Glycine--tRNA ligase beta subunit (692 aa).

It belongs to the class-II aminoacyl-tRNA synthetase family. Tetramer of two alpha and two beta subunits.

The protein localises to the cytoplasm. The catalysed reaction is tRNA(Gly) + glycine + ATP = glycyl-tRNA(Gly) + AMP + diphosphate. The chain is Glycine--tRNA ligase beta subunit from Pseudoalteromonas atlantica (strain T6c / ATCC BAA-1087).